The primary structure comprises 543 residues: ADP,ATP carrier protein 3 (543 aa).

10 consecutive transmembrane segments (helical) span residues 46 to 66 (VLYL…MGNL), 86 to 106 (IFLP…LSLF), 111 to 131 (MFDI…LVVW), 175 to 195 (FLFL…FNIF), 209 to 229 (ISVY…LTLV), 243 to 263 (ELGF…ILAL), 306 to 326 (LLIA…LVEA), 346 to 366 (FANF…LVVI), 382 to 402 (LASL…LIAF), and 504 to 524 (SVSG…LKYL).

It belongs to the ADP/ATP translocase tlc family.

The protein localises to the mitosome membrane. In terms of biological role, ATP transporter involved in the uptake of ATP from the parasite cell cytoplasm into the mitosome matrix. Equilibrates nucleotide pools across a concentration gradient between both sides of the mitosome membrane. This is ADP,ATP carrier protein 3 (NTT3) from Encephalitozoon cuniculi (strain GB-M1) (Microsporidian parasite).